Here is a 317-residue protein sequence, read N- to C-terminus: RHOMBOID-like protein 2 (317 aa).

7 helical membrane passes run 33 to 53 (SWLI…VMFV), 118 to 138 (WLHA…FIGI), 149 to 169 (VGLI…LFLQ), 172 to 192 (ISVG…SELL), 202 to 222 (AAAL…GMLP), 224 to 244 (VDNF…FVLL), and 272 to 292 (LFVV…VMLF). The active-site Nucleophile is Ser-177. His-229 (charge relay system) is an active-site residue.

This sequence belongs to the peptidase S54 family. In terms of tissue distribution, expressed in roots, seedlings, leaves, stems and flowers.

Its subcellular location is the golgi apparatus membrane. The catalysed reaction is Cleaves type-1 transmembrane domains using a catalytic dyad composed of serine and histidine that are contributed by different transmembrane domains.. In terms of biological role, rhomboid-type serine protease that catalyzes intramembrane proteolysis. Can cleave the Drosophila proteins Spitz and Keren. May function in pollen elongation. The polypeptide is RHOMBOID-like protein 2 (Arabidopsis thaliana (Mouse-ear cress)).